A 1002-amino-acid chain; its full sequence is Ephrin type-B receptor 5 (1002 aa).

A signal peptide spans 1 to 29; the sequence is MDSNADISARRVSGMDWLWLVCFFHLVTS. Over 30 to 564 the chain is Extracellular; sequence LEEILLDTTG…AQDRLPLIVG (535 aa). The Eph LBD domain occupies 31–213; the sequence is EEILLDTTGE…FFYKCPAVVK (183 aa). Fibronectin type-III domains lie at 344-452 and 453-548; these read APRD…TSQS and VPSA…TLMA. Residue asparagine 446 is glycosylated (N-linked (GlcNAc...) asparagine). Residues 565 to 585 form a helical membrane-spanning segment; it reads SALGGLAFLVIAAIAILAIIF. Over 586 to 1002 the chain is Cytoplasmic; the sequence is KSKRRETPYT…HLNQLEPVEV (417 aa). Residues 637–900 enclose the Protein kinase domain; sequence IKIEEVIGSG…QIVSALDKMI (264 aa). ATP-binding positions include 643–651 and lysine 669; that span reads IGSGEFGEV. Catalysis depends on aspartate 762, which acts as the Proton acceptor. The tract at residues 906 to 928 is disordered; that stretch reads LKATGTGSSRPSQPLLSNSPPDF. Positions 910 to 928 are enriched in polar residues; sequence GTGSSRPSQPLLSNSPPDF. Positions 929 to 993 constitute an SAM domain; sequence PSLSNAHEWL…LNSIQLMKVH (65 aa). A PDZ-binding motif is present at residues 1000-1002; the sequence is VEV.

The protein belongs to the protein kinase superfamily. Tyr protein kinase family. Ephrin receptor subfamily. As to expression, most abundant in thymus and detectable in brain, retina, kidney, lung and heart. Not detected in skeletal muscle and liver.

It is found in the membrane. It carries out the reaction L-tyrosyl-[protein] + ATP = O-phospho-L-tyrosyl-[protein] + ADP + H(+). Functionally, receptor for members of the ephrin-B family. This is Ephrin type-B receptor 5 (EPHB5) from Gallus gallus (Chicken).